We begin with the raw amino-acid sequence, 253 residues long: 5-oxoprolinase subunit A (253 aa).

The protein belongs to the LamB/PxpA family. As to quaternary structure, forms a complex composed of PxpA, PxpB and PxpC.

It catalyses the reaction 5-oxo-L-proline + ATP + 2 H2O = L-glutamate + ADP + phosphate + H(+). Catalyzes the cleavage of 5-oxoproline to form L-glutamate coupled to the hydrolysis of ATP to ADP and inorganic phosphate. The polypeptide is 5-oxoprolinase subunit A (Shouchella clausii (strain KSM-K16) (Alkalihalobacillus clausii)).